Consider the following 66-residue polypeptide: Regulator of G-protein signaling 6 (66 aa).

Residues 1-66 (LAVQDLKKQP…EDAQEHIYKL (66 aa)) form the RGS domain.

In terms of assembly, interacts with GNB5. Interacts with RGS7BP, leading to regulate the subcellular location of the heterodimer formed with GNB5. Interacts with GNAI1.

It is found in the cytoplasm. Its subcellular location is the cytosol. It localises to the membrane. The protein localises to the nucleus. The protein resides in the cell membrane. Functionally, regulates G protein-coupled receptor signaling cascades. Inhibits signal transduction by increasing the GTPase activity of G protein alpha subunits, thereby driving them into their inactive GDP-bound form. The RGS6/GNB5 dimer enhances GNAO1 GTPase activity. This chain is Regulator of G-protein signaling 6 (Rgs6), found in Rattus norvegicus (Rat).